The following is a 241-amino-acid chain: Pyridoxine 5'-phosphate synthase (241 aa).

A 3-amino-2-oxopropyl phosphate-binding site is contributed by N7. A 1-deoxy-D-xylulose 5-phosphate-binding site is contributed by 9–10 (DH). R18 lines the 3-amino-2-oxopropyl phosphate pocket. The active-site Proton acceptor is the H43. Residues R45 and H50 each coordinate 1-deoxy-D-xylulose 5-phosphate. Catalysis depends on E70, which acts as the Proton acceptor. A 1-deoxy-D-xylulose 5-phosphate-binding site is contributed by T100. H191 acts as the Proton donor in catalysis. Residues S192 and 213–214 (GH) contribute to the 3-amino-2-oxopropyl phosphate site.

This sequence belongs to the PNP synthase family. In terms of assembly, homooctamer; tetramer of dimers.

It localises to the cytoplasm. It carries out the reaction 3-amino-2-oxopropyl phosphate + 1-deoxy-D-xylulose 5-phosphate = pyridoxine 5'-phosphate + phosphate + 2 H2O + H(+). It functions in the pathway cofactor biosynthesis; pyridoxine 5'-phosphate biosynthesis; pyridoxine 5'-phosphate from D-erythrose 4-phosphate: step 5/5. In terms of biological role, catalyzes the complicated ring closure reaction between the two acyclic compounds 1-deoxy-D-xylulose-5-phosphate (DXP) and 3-amino-2-oxopropyl phosphate (1-amino-acetone-3-phosphate or AAP) to form pyridoxine 5'-phosphate (PNP) and inorganic phosphate. The protein is Pyridoxine 5'-phosphate synthase of Nitrosomonas eutropha (strain DSM 101675 / C91 / Nm57).